The primary structure comprises 156 residues: Large ribosomal subunit protein uL22 (156 aa).

Belongs to the universal ribosomal protein uL22 family. Part of the 50S ribosomal subunit.

Its function is as follows. This protein binds specifically to 23S rRNA. It makes multiple contacts with different domains of the 23S rRNA in the assembled 50S subunit and ribosome. The globular domain of the protein is located near the polypeptide exit tunnel on the outside of the subunit, while an extended beta-hairpin is found that lines the wall of the exit tunnel in the center of the 70S ribosome. This Aeropyrum pernix (strain ATCC 700893 / DSM 11879 / JCM 9820 / NBRC 100138 / K1) protein is Large ribosomal subunit protein uL22.